The following is a 662-amino-acid chain: Probable protein phosphatase CG10417 (662 aa).

The region spanning alanine 23–phenylalanine 564 is the PPM-type phosphatase domain. 2 residues coordinate Mn(2+): aspartate 57 and glycine 58. Disordered stretches follow at residues aspartate 219 to threonine 275 and glycine 288 to glutamine 374. 3 stretches are compositionally biased toward polar residues: residues aspartate 238–asparagine 252, asparagine 261–threonine 275, and glycine 288–serine 319. 2 positions are modified to phosphoserine: serine 289 and serine 306. The span at glutamine 320 to asparagine 334 shows a compositional bias: acidic residues. A compositionally biased stretch (polar residues) spans valine 337–serine 347. Positions aspartate 349–glutamine 374 are enriched in acidic residues. Mn(2+)-binding residues include aspartate 506 and aspartate 555. Residues valine 591–alanine 609 show a composition bias toward polar residues. Positions valine 591 to serine 662 are disordered. 3 positions are modified to phosphoserine: serine 592, serine 594, and serine 599. Residues leucine 616 to threonine 637 show a composition bias toward basic and acidic residues. Threonine 637 carries the post-translational modification Phosphothreonine. 2 positions are modified to phosphoserine: serine 639 and serine 641.

Belongs to the PP2C family. Requires Mg(2+) as cofactor. Mn(2+) is required as a cofactor.

The catalysed reaction is O-phospho-L-seryl-[protein] + H2O = L-seryl-[protein] + phosphate. It catalyses the reaction O-phospho-L-threonyl-[protein] + H2O = L-threonyl-[protein] + phosphate. The protein is Probable protein phosphatase CG10417 of Drosophila melanogaster (Fruit fly).